The primary structure comprises 151 residues: Gametocyte-specific factor 1-like (151 aa).

2 consecutive CHHC U11-48K-type zinc fingers follow at residues 6–33 (IEIC…RKKN) and 40–67 (MASC…VNRS). 8 residues coordinate Zn(2+): cysteine 9, histidine 15, histidine 25, cysteine 29, cysteine 43, histidine 49, histidine 59, and cysteine 63. The tract at residues 130 to 151 (QESRGGDQCPEDPQTRTRKANF) is disordered.

This sequence belongs to the UPF0224 (FAM112) family.

This Mus musculus (Mouse) protein is Gametocyte-specific factor 1-like (Gtsf1l).